The primary structure comprises 603 residues: Autophagy-related protein 13a (603 aa).

At Ser248 the chain carries Phosphoserine. Disordered stretches follow at residues 258 to 477 (PSPG…DDLD) and 498 to 518 (SHSLDRRKTSSSISQSLPLGR). The span at 301–315 (ATPNQSFSPAQSHQL) shows a compositional bias: polar residues. The span at 320 to 331 (HDFHWSRTDAFG) shows a compositional bias: basic and acidic residues. Polar residues-rich tracts occupy residues 371–386 (IPSSATLNRYVSSNFS) and 419–437 (SSRSGESPSGLMNQYPTQK). The span at 453–473 (LSSSDSPRFAFSRSPSRLSSQ) shows a compositional bias: low complexity.

Belongs to the ATG13 family. Plant subfamily. As to quaternary structure, interacts with ATG1A. Interacts with ATG11 and ATG101. Post-translationally, phosphorylated during nutrient starvation. Dephosphorylated in nutrient-rich conditions.

The protein resides in the cytoplasmic vesicle. The protein localises to the autophagosome. Its function is as follows. Involved in autophagy in a nutritional condition dependent manner. The ATG1-ATG13 protein kinase complex regulates downstream events required for autophagosome enclosure and/or vacuolar delivery. Becomes a target of autophagy under nutrient starvation. Connects autophagy to plant nutritional status. The sequence is that of Autophagy-related protein 13a from Arabidopsis thaliana (Mouse-ear cress).